The sequence spans 93 residues: Cell division protein CrgA (93 aa).

The next 2 membrane-spanning stretches (helical) occupy residues 31-51 (VWFV…LMVF) and 70-90 (LGPW…LLTM).

It belongs to the CrgA family.

The protein localises to the cell membrane. Involved in cell division. The sequence is that of Cell division protein CrgA from Mycobacterium marinum (strain ATCC BAA-535 / M).